Here is a 94-residue protein sequence, read N- to C-terminus: Small ribosomal subunit protein uS19c (94 aa).

It belongs to the universal ribosomal protein uS19 family.

The protein localises to the plastid. Functionally, protein S19 forms a complex with S13 that binds strongly to the 16S ribosomal RNA. The sequence is that of Small ribosomal subunit protein uS19c (rps19) from Epifagus virginiana (Beechdrops).